A 123-amino-acid polypeptide reads, in one-letter code: uncharacterized protein (123 aa).

2 consecutive transmembrane segments (helical) span residues 55–77 (LLIHSYISFMLTLCFFLSLSTIL) and 92–114 (FFINIIICYKHKSSAYCVYTIVY).

Its subcellular location is the cell membrane. This is an uncharacterized protein from Pasteurella multocida (strain Pm70).